The sequence spans 457 residues: Glycerol-3-phosphate acyltransferase 3 (457 aa).

The chain crosses the membrane as a helical span at residues 14-34 (WLTLVGSLILLPSAFGLSLGI). A phosphoserine mark is found at Ser-68 and Ser-77. 2 helical membrane-spanning segments follow: residues 137-157 (ISPKLTIVWVLGVLVRYCFLL) and 161-181 (VTLAFIGISLLIIGTTLVGQL). An HXXXXD motif motif is present at residues 229–234 (HTSPID). The tract at residues 429–457 (GNGSPSLALDSSTVDNHGSPEPAFRSESL) is disordered. Over residues 431–444 (GSPSLALDSSTVDN) the composition is skewed to polar residues.

The protein belongs to the 1-acyl-sn-glycerol-3-phosphate acyltransferase family.

The protein localises to the endoplasmic reticulum membrane. It carries out the reaction sn-glycerol 3-phosphate + an acyl-CoA = a 1-acyl-sn-glycero-3-phosphate + CoA. The enzyme catalyses a 1-acyl-sn-glycero-3-phosphate + an acyl-CoA = a 1,2-diacyl-sn-glycero-3-phosphate + CoA. It catalyses the reaction dodecanoyl-CoA + sn-glycerol 3-phosphate = 1-dodecanoyl-sn-glycerol 3-phosphate + CoA. The catalysed reaction is sn-glycerol 3-phosphate + hexadecanoyl-CoA = 1-hexadecanoyl-sn-glycero-3-phosphate + CoA. It carries out the reaction sn-glycerol 3-phosphate + (9Z)-octadecenoyl-CoA = 1-(9Z-octadecenoyl)-sn-glycero-3-phosphate + CoA. The enzyme catalyses (9Z,12Z)-octadecadienoyl-CoA + sn-glycerol 3-phosphate = 1-(9Z,12Z)-octadecadienoyl-sn-glycero-3-phosphate + CoA. It catalyses the reaction 1-tetradecanoyl-sn-glycerol 3-phosphate + (9Z)-octadecenoyl-CoA = 1-tetradecanoyl-2-(9Z)-octadecenoyl-sn-glycero-3-phosphate + CoA. The catalysed reaction is 1-hexadecanoyl-sn-glycero-3-phosphate + (9Z)-octadecenoyl-CoA = 1-hexadecanoyl-2-(9Z-octadecenoyl)-sn-glycero-3-phosphate + CoA. It carries out the reaction 1-(9Z-octadecenoyl)-sn-glycero-3-phosphate + (9Z)-octadecenoyl-CoA = 1,2-di-(9Z-octadecenoyl)-sn-glycero-3-phosphate + CoA. The enzyme catalyses 1-(6Z,9Z,12Z-octadecatrienoyl)-sn-glycero-3-phosphate + (9Z)-octadecenoyl-CoA = (6Z,9Z,12Z)-octadecatrienoyl-2-(9Z)-octadecenoyl-sn-glycero-3-phosphate + CoA. It catalyses the reaction 1-(9Z,12Z,15Z)-octadecatrienoyl-sn-glycero-3-phosphate + (9Z)-octadecenoyl-CoA = 1-(9Z,12Z,15Z)-octadecatrienoyl-2-(9Z)-octadecenoyl-sn-glycero-3-phosphate + CoA. The catalysed reaction is 1-(9Z-octadecenoyl)-sn-glycero-3-phosphate + tetradecanoyl-CoA = 1-(9Z)-octadecenoyl-2-tetradecanoyl-sn-glycero-3-phosphate + CoA. It carries out the reaction 1-(9Z-octadecenoyl)-sn-glycero-3-phosphate + hexadecanoyl-CoA = 1-(9Z)-octadecenoyl-2-hexadecanoyl-sn-glycero-3-phosphate + CoA. The enzyme catalyses 1-(9Z-octadecenoyl)-sn-glycero-3-phosphate + octadecanoyl-CoA = 1-(9Z-octadecenoyl)-2-octadecanoyl-sn-glycero-3-phosphate + CoA. It catalyses the reaction 1-(9Z-octadecenoyl)-sn-glycero-3-phosphate + (9Z,12Z)-octadecadienoyl-CoA = 1-(9Z)-octadecenoyl-2-(9Z,12Z)-octadecadienoyl-sn-glycero-3-phosphate + CoA. The catalysed reaction is 1-(5Z,8Z,11Z,14Z-eicosatetraenoyl)-sn-glycero-3-phosphate + (9Z)-octadecenoyl-CoA = 1-(5Z,8Z,11Z,14Z)-eicosatetraenoyl-2-(9Z)-octadecenoyl-sn-glycero-3-phosphate + CoA. It participates in glycerolipid metabolism; triacylglycerol biosynthesis. The protein operates within phospholipid metabolism; CDP-diacylglycerol biosynthesis; CDP-diacylglycerol from sn-glycerol 3-phosphate: step 1/3. Converts glycerol-3-phosphate to 1-acyl-sn-glycerol-3-phosphate (lysophosphatidic acid or LPA) by incorporating an acyl moiety at the sn-1 position of the glycerol backbone. Also converts LPA into 1,2-diacyl-sn-glycerol-3-phosphate (phosphatidic acid or PA) by incorporating an acyl moiety at the sn-2 position of the glycerol backbone. Protects cells against lipotoxicity. The chain is Glycerol-3-phosphate acyltransferase 3 from Rattus norvegicus (Rat).